The chain runs to 356 residues: Xylose/arabinose import permease protein XylH (356 aa).

10 helical membrane-spanning segments follow: residues 14-34 (LFLVNVIIALFFYFENSAYFS), 41-61 (IFQYLAEIGIIAIGEAMLMLC), 70-90 (ALANFVPLITLTIYNSIYQAI), 96-116 (IVVSILLSLGLASLIGLMNGL), 126-146 (LITTVGTLFLFNGIALIYSGG), 161-181 (VSILPVPFIWSLGALVFLILL), 211-231 (VKIINFIIMANIGALVGIIQG), 242-262 (FTADVVLEGIAAAVIGGTSLV), 266-286 (GSLVGAFLGSVFISELLNGFN), and 287-307 (ILGINAYEFDAILGGAIVVVM).

It belongs to the binding-protein-dependent transport system permease family. As to quaternary structure, the complex is composed of two ATP-binding proteins (XylG), two transmembrane proteins (XylH) and a solute-binding protein (XylF).

The protein resides in the cell membrane. In terms of biological role, part of the ABC transporter complex XylFGH involved in the uptake of xylose and arabinose. Responsible for the translocation of the substrate across the membrane. The polypeptide is Xylose/arabinose import permease protein XylH (Sulfolobus acidocaldarius (strain ATCC 33909 / DSM 639 / JCM 8929 / NBRC 15157 / NCIMB 11770)).